We begin with the raw amino-acid sequence, 1114 residues long: Mediator of RNA polymerase II transcription subunit 14 (1114 aa).

3 disordered regions span residues 1-27 (MPGV…QDGL), 40-79 (ANAQ…GPPE), and 120-141 (HGIH…SPGN). The segment covering 126-140 (TAPTTGKSPGNQSPG) has biased composition (polar residues).

It belongs to the Mediator complex subunit 14 family. In terms of assembly, component of the Mediator complex.

It localises to the nucleus. In terms of biological role, component of the Mediator complex, a coactivator involved in the regulated transcription of nearly all RNA polymerase II-dependent genes. Mediator functions as a bridge to convey information from gene-specific regulatory proteins to the basal RNA polymerase II transcription machinery. Mediator is recruited to promoters by direct interactions with regulatory proteins and serves as a scaffold for the assembly of a functional preinitiation complex with RNA polymerase II and the general transcription factors. The sequence is that of Mediator of RNA polymerase II transcription subunit 14 (rgr1) from Aspergillus niger (strain ATCC MYA-4892 / CBS 513.88 / FGSC A1513).